A 120-amino-acid polypeptide reads, in one-letter code: Proteinase inhibitor (120 aa).

A signal peptide spans 1–19; it reads MKQLIIATLLSALSGGCMA. Residues Cys-43 and Cys-65 are joined by a disulfide bond.

Belongs to the protease inhibitor I38 family. In terms of assembly, monomer.

It localises to the periplasm. Its function is as follows. Inhibitor of the extracellular proteases A, B, and C of E.chrysanthemi and the S.marcescens 50 kDa extracellular protease. It forms a non-covalent bond with the proteases and may prevent autocatalytic cleavage of the proteases zymogen in the periplasm. This Dickeya chrysanthemi (Pectobacterium chrysanthemi) protein is Proteinase inhibitor (inh).